The chain runs to 217 residues: Large ribosomal subunit protein uL4 (217 aa).

This sequence belongs to the universal ribosomal protein uL4 family. Part of the 50S ribosomal subunit.

Its function is as follows. One of the primary rRNA binding proteins, this protein initially binds near the 5'-end of the 23S rRNA. It is important during the early stages of 50S assembly. It makes multiple contacts with different domains of the 23S rRNA in the assembled 50S subunit and ribosome. Functionally, forms part of the polypeptide exit tunnel. This is Large ribosomal subunit protein uL4 from Koribacter versatilis (strain Ellin345).